Reading from the N-terminus, the 214-residue chain is Leucyl/phenylalanyl-tRNA--protein transferase (214 aa).

Residues 194–214 (FAPPGYSPDPASVVQRSSQTS) form a disordered region.

It belongs to the L/F-transferase family.

It localises to the cytoplasm. It carries out the reaction N-terminal L-lysyl-[protein] + L-leucyl-tRNA(Leu) = N-terminal L-leucyl-L-lysyl-[protein] + tRNA(Leu) + H(+). It catalyses the reaction N-terminal L-arginyl-[protein] + L-leucyl-tRNA(Leu) = N-terminal L-leucyl-L-arginyl-[protein] + tRNA(Leu) + H(+). The enzyme catalyses L-phenylalanyl-tRNA(Phe) + an N-terminal L-alpha-aminoacyl-[protein] = an N-terminal L-phenylalanyl-L-alpha-aminoacyl-[protein] + tRNA(Phe). Functions in the N-end rule pathway of protein degradation where it conjugates Leu, Phe and, less efficiently, Met from aminoacyl-tRNAs to the N-termini of proteins containing an N-terminal arginine or lysine. The chain is Leucyl/phenylalanyl-tRNA--protein transferase from Cereibacter sphaeroides (strain ATCC 17025 / ATH 2.4.3) (Rhodobacter sphaeroides).